A 429-amino-acid chain; its full sequence is Dihydroorotase (429 aa).

The Zn(2+) site is built by H62 and H64. Residues 64–66 (HFR) and N96 each bind substrate. Residues D154, H181, and H234 each coordinate Zn(2+). A substrate-binding site is contributed by N280. Residue D307 participates in Zn(2+) binding. The active site involves D307. Substrate contacts are provided by residues H311 and 325-326 (FG).

It belongs to the metallo-dependent hydrolases superfamily. DHOase family. Class I DHOase subfamily. The cofactor is Zn(2+).

It carries out the reaction (S)-dihydroorotate + H2O = N-carbamoyl-L-aspartate + H(+). The protein operates within pyrimidine metabolism; UMP biosynthesis via de novo pathway; (S)-dihydroorotate from bicarbonate: step 3/3. Functionally, catalyzes the reversible cyclization of carbamoyl aspartate to dihydroorotate. This Latilactobacillus sakei subsp. sakei (strain 23K) (Lactobacillus sakei subsp. sakei) protein is Dihydroorotase.